The sequence spans 618 residues: Proline--tRNA ligase (618 aa).

The protein belongs to the class-II aminoacyl-tRNA synthetase family. ProS type 1 subfamily. Homodimer.

It localises to the cytoplasm. The enzyme catalyses tRNA(Pro) + L-proline + ATP = L-prolyl-tRNA(Pro) + AMP + diphosphate. Catalyzes the attachment of proline to tRNA(Pro) in a two-step reaction: proline is first activated by ATP to form Pro-AMP and then transferred to the acceptor end of tRNA(Pro). As ProRS can inadvertently accommodate and process non-cognate amino acids such as alanine and cysteine, to avoid such errors it has two additional distinct editing activities against alanine. One activity is designated as 'pretransfer' editing and involves the tRNA(Pro)-independent hydrolysis of activated Ala-AMP. The other activity is designated 'posttransfer' editing and involves deacylation of mischarged Ala-tRNA(Pro). The misacylated Cys-tRNA(Pro) is not edited by ProRS. This Streptococcus pyogenes serotype M28 (strain MGAS6180) protein is Proline--tRNA ligase.